Consider the following 381-residue polypeptide: S-adenosylmethionine synthase (381 aa).

An ATP-binding site is contributed by histidine 15. Aspartate 17 provides a ligand contact to Mg(2+). Residue glutamate 43 participates in K(+) binding. L-methionine-binding residues include glutamate 56 and glutamine 99. A flexible loop region spans residues 99 to 109 (QSPDINQGVDR). Residues 164–166 (DAK), 230–231 (RF), aspartate 239, 245–246 (RK), alanine 262, and lysine 266 each bind ATP. Aspartate 239 contacts L-methionine. Lysine 270 is an L-methionine binding site.

This sequence belongs to the AdoMet synthase family. In terms of assembly, homotetramer; dimer of dimers. It depends on Mg(2+) as a cofactor. K(+) serves as cofactor.

Its subcellular location is the cytoplasm. The catalysed reaction is L-methionine + ATP + H2O = S-adenosyl-L-methionine + phosphate + diphosphate. Its pathway is amino-acid biosynthesis; S-adenosyl-L-methionine biosynthesis; S-adenosyl-L-methionine from L-methionine: step 1/1. In terms of biological role, catalyzes the formation of S-adenosylmethionine (AdoMet) from methionine and ATP. The overall synthetic reaction is composed of two sequential steps, AdoMet formation and the subsequent tripolyphosphate hydrolysis which occurs prior to release of AdoMet from the enzyme. The sequence is that of S-adenosylmethionine synthase from Alteromonas mediterranea (strain DSM 17117 / CIP 110805 / LMG 28347 / Deep ecotype).